The following is a 156-amino-acid chain: RNA pyrophosphohydrolase (156 aa).

The region spanning 6–148 is the Nudix hydrolase domain; the sequence is NYRPNVAAIV…KKNIYVKVIK (143 aa). A Nudix box motif is present at residues 43 to 64; it reads GGIDKGESAKNALFRELKEEIG.

The protein belongs to the Nudix hydrolase family. RppH subfamily. The cofactor is a divalent metal cation.

Accelerates the degradation of transcripts by removing pyrophosphate from the 5'-end of triphosphorylated RNA, leading to a more labile monophosphorylated state that can stimulate subsequent ribonuclease cleavage. The polypeptide is RNA pyrophosphohydrolase (Campylobacter jejuni subsp. doylei (strain ATCC BAA-1458 / RM4099 / 269.97)).